The sequence spans 468 residues: 3-isopropylmalate dehydratase large subunit (468 aa).

The [4Fe-4S] cluster site is built by cysteine 347, cysteine 407, and cysteine 410.

It belongs to the aconitase/IPM isomerase family. LeuC type 1 subfamily. As to quaternary structure, heterodimer of LeuC and LeuD. It depends on [4Fe-4S] cluster as a cofactor.

The enzyme catalyses (2R,3S)-3-isopropylmalate = (2S)-2-isopropylmalate. It participates in amino-acid biosynthesis; L-leucine biosynthesis; L-leucine from 3-methyl-2-oxobutanoate: step 2/4. Its function is as follows. Catalyzes the isomerization between 2-isopropylmalate and 3-isopropylmalate, via the formation of 2-isopropylmaleate. This Synechococcus elongatus (strain ATCC 33912 / PCC 7942 / FACHB-805) (Anacystis nidulans R2) protein is 3-isopropylmalate dehydratase large subunit.